The primary structure comprises 459 residues: Ribulose bisphosphate carboxylase large chain (459 aa).

Residue Lys-4 is modified to N6,N6,N6-trimethyllysine. Residues Asn-113 and Thr-163 each coordinate substrate. Lys-165 serves as the catalytic Proton acceptor. Lys-167 is a binding site for substrate. Mg(2+) contacts are provided by Lys-191, Asp-193, and Glu-194. At Lys-191 the chain carries N6-carboxylysine. His-284 (proton acceptor) is an active-site residue. Substrate contacts are provided by Arg-285, His-317, and Ser-369.

This sequence belongs to the RuBisCO large chain family. Type I subfamily. As to quaternary structure, heterohexadecamer of 8 large chains and 8 small chains; disulfide-linked. The disulfide link is formed within the large subunit homodimers. Requires Mg(2+) as cofactor. The disulfide bond which can form in the large chain dimeric partners within the hexadecamer appears to be associated with oxidative stress and protein turnover.

The protein localises to the plastid. It localises to the chloroplast. It catalyses the reaction 2 (2R)-3-phosphoglycerate + 2 H(+) = D-ribulose 1,5-bisphosphate + CO2 + H2O. It carries out the reaction D-ribulose 1,5-bisphosphate + O2 = 2-phosphoglycolate + (2R)-3-phosphoglycerate + 2 H(+). Functionally, ruBisCO catalyzes two reactions: the carboxylation of D-ribulose 1,5-bisphosphate, the primary event in carbon dioxide fixation, as well as the oxidative fragmentation of the pentose substrate in the photorespiration process. Both reactions occur simultaneously and in competition at the same active site. This Morus alba (White mulberry) protein is Ribulose bisphosphate carboxylase large chain.